A 489-amino-acid chain; its full sequence is 3-octaprenyl-4-hydroxybenzoate carboxy-lyase (489 aa).

Asn-172 contacts Mn(2+). Residues 175–177 (IYR), 189–191 (RWL), and 194–195 (RG) contribute to the prenylated FMN site. Glu-238 is a binding site for Mn(2+). Asp-287 serves as the catalytic Proton donor.

This sequence belongs to the UbiD family. Homohexamer. Prenylated FMN serves as cofactor. Requires Mn(2+) as cofactor.

The protein localises to the cell membrane. The catalysed reaction is a 4-hydroxy-3-(all-trans-polyprenyl)benzoate + H(+) = a 2-(all-trans-polyprenyl)phenol + CO2. It participates in cofactor biosynthesis; ubiquinone biosynthesis. Functionally, catalyzes the decarboxylation of 3-octaprenyl-4-hydroxy benzoate to 2-octaprenylphenol, an intermediate step in ubiquinone biosynthesis. This Glaesserella parasuis serovar 5 (strain SH0165) (Haemophilus parasuis) protein is 3-octaprenyl-4-hydroxybenzoate carboxy-lyase.